The following is a 1239-amino-acid chain: Anillin (1239 aa).

Disordered stretches follow at residues 32 to 67, 230 to 265, 493 to 621, and 684 to 716; these read CSVP…SGGG, EAPP…RTKQ, FDNQ…MCNG, and GSTQ…NSFS. Positions 53–63 are enriched in low complexity; that stretch reads RSRSPGGQSAA. The tract at residues 126-371 is interaction with and bundling of F-actin; sequence EQAEGGALNP…ENKGTGGQSQ (246 aa). The segment covering 252 to 265 has biased composition (basic and acidic residues); the sequence is PKKDEVDEASRTKQ. Positions 500-518 are enriched in low complexity; the sequence is SSVAAQARPPAPAPSRVVR. The span at 519 to 528 shows a compositional bias: pro residues; that stretch reads PMPPPPPPPI. The segment covering 551–563 has biased composition (basic and acidic residues); the sequence is EDSKRARKSHSDR. Residues 594–610 are compositionally biased toward acidic residues; the sequence is DEEETESCMDESDDQSQ. Positions 699–716 are enriched in polar residues; the sequence is ASRLSLGSKGTTASNSFS. Ser712 is modified (phosphoserine). At Thr740 the chain carries Phosphothreonine. Residues Ser744 and Ser754 each carry the phosphoserine modification. Thr831 bears the Phosphothreonine mark. The stretch at 834-861 forms a coiled coil; the sequence is DDEEMQNAREVNDASQAQDKIKKLLSEV. The region spanning 1106-1230 is the PH domain; sequence SVEYKGFLTM…WCAYLNKALT (125 aa).

Interacts with and bundles F-actin. Accumulates in the ring canals that interconnect cells of the germline cysts in males and the ovarian follicles in females. These structures develop from arrested contractile rings after a specialized cytokinesis in which the closing of the invaginating plasma membrane is incomplete. Also concentrates in the arrested cleavage furrows that initially link the oocyte to its 15 nurse cells in the early egg chamber and is subsequently lost from these furrows as germline cell division is completed.

It localises to the nucleus. It is found in the cytoplasm. The protein localises to the cytoskeleton. The protein resides in the cell cortex. Its subcellular location is the cell projection. It localises to the cilium. It is found in the flagellum. Required for cytokinesis. Essential for the structural integrity of the cleavage furrow and for completion of cleavage furrow ingression and proper formation of the midbody. Required during cellularization of syncytial embryos for the proper formation and function of the furrow canals, the stable inward folds of the plasma membrane which separate the peripheral nuclei. Also required for the formation of the pole cells, the progenitors of the adult germline which are formed by cytokinesis of the cytoplasmic buds at the posterior pole of the syncytial embryo. Essential for embryonic viability. This Drosophila melanogaster (Fruit fly) protein is Anillin (scra).